Here is a 564-residue protein sequence, read N- to C-terminus: Septin-9 (564 aa).

M1 carries the post-translational modification N-acetylmethionine. A Phosphoserine modification is found at S12. T24 and T31 each carry phosphothreonine. 2 disordered regions span residues 38–165 (VASS…PVTD) and 178–224 (PAEA…DSEV). K44 carries the post-translational modification N6-acetyllysine. A phosphoserine mark is found at S64, S67, and S71. Over residues 95–109 (DISSKQVESTASTPG) the composition is skewed to polar residues. Over residues 116–134 (KRAEVLGHKTPEPVPRRTE) the composition is skewed to basic and acidic residues. Phosphothreonine is present on T125. Positions 190-203 (TLENSEAPMSQLQS) are enriched in polar residues. At Y258 the chain carries Phosphotyrosine. Residues 275–546 (QGFEFNIMVV…EAYRVKRLNE (272 aa)) form the Septin-type G domain. Residues 285–292 (GQSGLGKS) are G1 motif. 285 to 292 (GQSGLGKS) lines the GTP pocket. A phosphoserine mark is found at S307 and S312. GTP contacts are provided by residues T319, G345, 425-433 (KADTLTLEE), G480, and R495. The G3 motif stretch occupies residues 342 to 345 (DTPG). The G4 motif stretch occupies residues 424-427 (AKAD).

Belongs to the TRAFAC class TrmE-Era-EngA-EngB-Septin-like GTPase superfamily. Septin GTPase family. In terms of assembly, septins polymerize into heterooligomeric protein complexes that form filaments, and associate with cellular membranes, actin filaments, and microtubules. GTPase activity is required for filament formation. Interacts with SEPTIN2, SEPTIN6, SEPTIN7, SEPTIN11 and SEPTIN14. Interacts with RTKN and ARHGEF18. As to expression, expressed in the brain, mainly in the perikarya and processes of astrocytes in the cerebellum, dentate gyrus and corpus callosum (at protein level). In the sciatic nerve, highly expressed in Schwann cells (at protein level). Isoforms are differentially expressed in testes, kidney, liver, heart, spleen and brain. Undetectable in skeletal muscle.

Its subcellular location is the cytoplasm. The protein resides in the cytoskeleton. In terms of biological role, filament-forming cytoskeletal GTPase. May play a role in cytokinesis (Potential). The polypeptide is Septin-9 (Rattus norvegicus (Rat)).